Reading from the N-terminus, the 68-residue chain is Protein transport protein Sec61 gamma-2 subunit (68 aa).

The Cytoplasmic portion of the chain corresponds to Met-1–Glu-32. A helical transmembrane segment spans residues Phe-33–Ile-61. Residues Asn-62 to Ser-68 are Extracellular-facing.

Belongs to the SecE/SEC61-gamma family. Heterotrimeric complex composed of SEC61-alpha, SEC61-beta and SEC61-gamma.

It localises to the endoplasmic reticulum membrane. In terms of biological role, necessary for protein translocation in the endoplasmic reticulum. In Drosophila melanogaster (Fruit fly), this protein is Protein transport protein Sec61 gamma-2 subunit (Sec61gamma).